The following is a 586-amino-acid chain: Arginine--tRNA ligase (586 aa).

A 'HIGH' region motif is present at residues A133–S143.

The protein belongs to the class-I aminoacyl-tRNA synthetase family. As to quaternary structure, monomer.

Its subcellular location is the cytoplasm. It carries out the reaction tRNA(Arg) + L-arginine + ATP = L-arginyl-tRNA(Arg) + AMP + diphosphate. This Leptospira interrogans serogroup Icterohaemorrhagiae serovar Lai (strain 56601) protein is Arginine--tRNA ligase.